A 267-amino-acid chain; its full sequence is MSDILDKILAVKADEVSAARKKRDLPSLRAEAESLRNEAGFAPRGFERSLRDKIAAGHAGVIAEVKKASPSKGVLRENFVPEAIAESYASHGAACLSVLTDVNFFQGHADYLKRARGACPLPALRKDFMVDLYQVYEARSWGADCILLIVAALDPGLMADLEACAHELGMDVLVEVHGADELDSALRLKTPLLGVNNRNLRTFEVSLDNTLDLLPSMPADRLVVTESGILGPNDVKRMRDADVHAFLVGEAFMRAKDPGVELARLFA.

The protein belongs to the TrpC family.

The enzyme catalyses 1-(2-carboxyphenylamino)-1-deoxy-D-ribulose 5-phosphate + H(+) = (1S,2R)-1-C-(indol-3-yl)glycerol 3-phosphate + CO2 + H2O. The protein operates within amino-acid biosynthesis; L-tryptophan biosynthesis; L-tryptophan from chorismate: step 4/5. The chain is Indole-3-glycerol phosphate synthase from Cupriavidus pinatubonensis (strain JMP 134 / LMG 1197) (Cupriavidus necator (strain JMP 134)).